We begin with the raw amino-acid sequence, 283 residues long: MANLKALFLRMKSVKSIQKTTKVMQMISAAKLRQVQQRLNNARMHMLELSKIIDTNVVSKNNECTDRHNKKDILLVIMSSDRGLCGNFNNMIVKFAKSYIEELESCGKNVKLLFFGKVAYNMMCSQYSSKILDVFSNIQSITDFLSFKLFLYGSGVDFNQFIDVMVLFNKFYTTILQKPTVEQLMPCNIDISVSLKEYYKYEPAYLNVLSTMSLSYILNLMYIAFLENCASEHSSRVIAMESANNNTKEMLSKLVLQYNRSRQAAITTDLIEVISGFESLGNQ.

This sequence belongs to the ATPase gamma chain family. In terms of assembly, F-type ATPases have 2 components, CF(1) - the catalytic core - and CF(0) - the membrane proton channel. CF(1) has five subunits: alpha(3), beta(3), gamma(1), delta(1), epsilon(1). CF(0) has three main subunits: a, b and c.

It is found in the cell inner membrane. Its function is as follows. Produces ATP from ADP in the presence of a proton gradient across the membrane. The gamma chain is believed to be important in regulating ATPase activity and the flow of protons through the CF(0) complex. The sequence is that of ATP synthase gamma chain from Ehrlichia ruminantium (strain Gardel).